The chain runs to 95 residues: Defensin-A3 (95 aa).

The signal sequence occupies residues 1-19; the sequence is MRTLGLLLALLFLAAQTPA. A propeptide spanning residues 20–61 is cleaved from the precursor; that stretch reads QLMGEEAEEATGRPEATEAQEAAAALMAARAADRHVTDPEQQ. 3 disulfide bridges follow: C66–C93, C68–C82, and C72–C92.

Belongs to the alpha-defensin family. Highly expressed in spleen, and expressed at lower levels in intestin and lung.

The protein localises to the secreted. Its function is as follows. Has antimicrobial activity. This is Defensin-A3 from Ornithorhynchus anatinus (Duckbill platypus).